A 257-amino-acid polypeptide reads, in one-letter code: Aspartate/glutamate leucyltransferase (257 aa).

The protein belongs to the R-transferase family. Bpt subfamily.

The protein localises to the cytoplasm. The catalysed reaction is N-terminal L-glutamyl-[protein] + L-leucyl-tRNA(Leu) = N-terminal L-leucyl-L-glutamyl-[protein] + tRNA(Leu) + H(+). The enzyme catalyses N-terminal L-aspartyl-[protein] + L-leucyl-tRNA(Leu) = N-terminal L-leucyl-L-aspartyl-[protein] + tRNA(Leu) + H(+). Functions in the N-end rule pathway of protein degradation where it conjugates Leu from its aminoacyl-tRNA to the N-termini of proteins containing an N-terminal aspartate or glutamate. This chain is Aspartate/glutamate leucyltransferase, found in Nitrobacter hamburgensis (strain DSM 10229 / NCIMB 13809 / X14).